The following is a 512-amino-acid chain: Mesoderm induction early response protein 1 (512 aa).

Residues 1–16 (MAEPSVESSSPGGSAT) show a composition bias toward low complexity. Disordered regions lie at residues 1–63 (MAEP…REGD) and 75–173 (YGST…EDYI). Ser10 is subject to Phosphoserine. Residues 17 to 36 (SDDHEFDPSADMLVHDFDDE) are compositionally biased toward basic and acidic residues. 2 stretches are compositionally biased toward acidic residues: residues 37-46 (RTLEEEEMME) and 83-105 (EEDEEEEEEEEEGEDDEDADNDD). Positions 129–144 (QSSNDDPSQSVASQDA) are enriched in polar residues. A Phosphoserine modification is found at Ser141. Tyr155 carries the post-translational modification Phosphotyrosine. Phosphoserine is present on residues Ser160 and Ser166. Over residues 160-173 (SEVEEESEEDEDYI) the composition is skewed to acidic residues. Residues 180 to 278 (KEIMVGSMFQ…EALRRLRFNV (99 aa)) form the ELM2 domain. Residues 180-284 (KEIMVGSMFQ…RFNVKAAREE (105 aa)) form an interaction with HDAC1 region. Lys239 participates in a covalent cross-link: Glycyl lysine isopeptide (Lys-Gly) (interchain with G-Cter in SUMO2). Residues 283 to 335 (EELSVWTEEECRNFEQGLKAYGKDFHLIQANKVRTRSVGECVAFYYMWKKSER) form the SANT domain. A disordered region spans residues 366 to 512 (ESESAASSRA…KFEELENTDD (147 aa)). Ser367, Ser369, and Ser377 each carry phosphoserine. Polar residues predominate over residues 396–409 (TVSTTNQNGVSSNG). The span at 414 to 423 (LNKEEVKVEG) shows a compositional bias: basic and acidic residues. Lys420 is covalently cross-linked (Glycyl lysine isopeptide (Lys-Gly) (interchain with G-Cter in SUMO2)). Thr448 carries the phosphothreonine modification. Basic and acidic residues predominate over residues 462-475 (ARNENDFDEKSERP). The span at 482–494 (NSNGKESPGSSEF) shows a compositional bias: polar residues. A phosphoserine mark is found at Ser483, Ser488, and Ser491.

In terms of assembly, interacts with HDAC1. Part of a complex containing at least CDYL, MIER1, MIER2, HDAC1 and HDAC2.

It is found in the nucleus. Its function is as follows. Transcriptional repressor regulating the expression of a number of genes including SP1 target genes. Probably functions through recruitment of HDAC1 a histone deacetylase involved in chromatin silencing. The polypeptide is Mesoderm induction early response protein 1 (MIER1) (Pongo abelii (Sumatran orangutan)).